The sequence spans 332 residues: Nuclear migration protein nudC (332 aa).

Positions 122–161 (RQQLLDSAGGEPSASNRDGISKPIEKVDDESDKSELGKLM) are disordered. A CS domain is found at 168-259 (CTLENYTWTQ…NKMNWWSRLV (92 aa)).

Belongs to the nudC family. As to quaternary structure, interacts with PCID2.

The protein localises to the cytoplasm. Functionally, chaperone protein with functions in nuclear localization and cytoplasmic mRNA trafficking. In postmitotic neurons, acts with nudE downstream of dar1 to ensure correct positioning of the nuclei in primary dendrites and as a consequence, is required for determining multipolar neuron morphology. Stabilizes PCID2 in the cytoplasm and thereby is required for promoting cytoplasmic mRNA trafficking. This chain is Nuclear migration protein nudC, found in Drosophila melanogaster (Fruit fly).